The primary structure comprises 37 residues: Large ribosomal subunit protein bL36 (37 aa).

It belongs to the bacterial ribosomal protein bL36 family.

The sequence is that of Large ribosomal subunit protein bL36 from Acidithiobacillus ferrooxidans (strain ATCC 23270 / DSM 14882 / CIP 104768 / NCIMB 8455) (Ferrobacillus ferrooxidans (strain ATCC 23270)).